Consider the following 110-residue polypeptide: MTLEKTTRMNYLFDFYQSLLTAKQKSYMSLYYLDDFSLGEIADEYEVSRQAVYDNIKRTEAMLEQYEEKLLLFKKFKERKELLKKMRELVADSAQTEEAEALIESLEKLD.

This sequence belongs to the UPF0122 family.

Functionally, might take part in the signal recognition particle (SRP) pathway. This is inferred from the conservation of its genetic proximity to ftsY/ffh. May be a regulatory protein. This chain is UPF0122 protein BPUM_1495, found in Bacillus pumilus (strain SAFR-032).